A 327-amino-acid polypeptide reads, in one-letter code: 3' cyclic ADP-D-ribose synthase AaTIR (327 aa).

The interval 10–120 is TIR domain; it reads VALSFAGENR…GILKTIGYIN (111 aa). K229 is an active-site residue.

As to quaternary structure, homodimer.

The catalysed reaction is NADP(+) + H2O = ADP-D-ribose 2'-phosphate + nicotinamide + H(+). The enzyme catalyses NAD(+) = 3'cADPR + nicotinamide + H(+). In terms of biological role, NAD(+) hydrolase (NADase) that generates 3'cADPR, a cyclization variant of cyclic ADP-D-ribose (also called v2-cADPR). Also cleaves NADP(+), but does not cyclize the product. This Aquimarina amphilecti protein is 3' cyclic ADP-D-ribose synthase AaTIR.